Reading from the N-terminus, the 246-residue chain is UDP-N-acetyl-D-mannosaminuronic acid transferase (246 aa).

This sequence belongs to the glycosyltransferase 26 family.

The catalysed reaction is UDP-N-acetyl-alpha-D-mannosaminouronate + N-acetyl-alpha-D-glucosaminyl-di-trans,octa-cis-undecaprenyl diphosphate = beta-D-ManNAcA-(1-&gt;4)-alpha-D-GlcNAc-di-trans,octa-cis-undecaprenyl diphosphate + UDP + H(+). It functions in the pathway bacterial outer membrane biogenesis; enterobacterial common antigen biosynthesis. Its function is as follows. Catalyzes the synthesis of Und-PP-GlcNAc-ManNAcA (Lipid II), the second lipid-linked intermediate involved in enterobacterial common antigen (ECA) synthesis. The polypeptide is UDP-N-acetyl-D-mannosaminuronic acid transferase (Escherichia coli (strain 55989 / EAEC)).